A 316-amino-acid polypeptide reads, in one-letter code: Alpha- and gamma-adaptin-binding protein p34 (316 aa).

Positions 198-232 (ASAESCHSEQQEPSPTAERTESLPGHHSGACGSAG) are disordered. Residues 222-232 (GHHSGACGSAG) are compositionally biased toward low complexity. Ser311 and Ser312 each carry phosphoserine.

Associated with AP-1 and AP-2 complexes.

The protein resides in the cytoplasm. Its subcellular location is the cytosol. Its function is as follows. May be involved in endocytic recycling of growth factor receptors such as EGFR. This Mus musculus (Mouse) protein is Alpha- and gamma-adaptin-binding protein p34 (Aagab).